Reading from the N-terminus, the 216-residue chain is ATP-dependent dethiobiotin synthetase BioD (216 aa).

Position 12 to 17 (12 to 17 (NVGKTF)) interacts with ATP. Residue Thr-16 participates in Mg(2+) binding. Lys-36 is a catalytic residue. Residue Ser-40 participates in substrate binding. Residues Asp-53, 110 to 113 (EGAG), and 170 to 171 (NQ) each bind ATP. Mg(2+)-binding residues include Asp-53 and Glu-110.

The protein belongs to the dethiobiotin synthetase family. As to quaternary structure, homodimer. It depends on Mg(2+) as a cofactor.

The protein resides in the cytoplasm. The catalysed reaction is (7R,8S)-7,8-diammoniononanoate + CO2 + ATP = (4R,5S)-dethiobiotin + ADP + phosphate + 3 H(+). It functions in the pathway cofactor biosynthesis; biotin biosynthesis; biotin from 7,8-diaminononanoate: step 1/2. Catalyzes a mechanistically unusual reaction, the ATP-dependent insertion of CO2 between the N7 and N8 nitrogen atoms of 7,8-diaminopelargonic acid (DAPA, also called 7,8-diammoniononanoate) to form a ureido ring. The protein is ATP-dependent dethiobiotin synthetase BioD of Vesicomyosocius okutanii subsp. Calyptogena okutanii (strain HA).